The chain runs to 264 residues: Thiazole synthase (264 aa).

Catalysis depends on K98, which acts as the Schiff-base intermediate with DXP. Residues G159, 185–186, and 207–208 each bind 1-deoxy-D-xylulose 5-phosphate; these read AG and AS.

Belongs to the ThiG family. As to quaternary structure, homotetramer. Forms heterodimers with either ThiH or ThiS.

The protein resides in the cytoplasm. It carries out the reaction [ThiS sulfur-carrier protein]-C-terminal-Gly-aminoethanethioate + 2-iminoacetate + 1-deoxy-D-xylulose 5-phosphate = [ThiS sulfur-carrier protein]-C-terminal Gly-Gly + 2-[(2R,5Z)-2-carboxy-4-methylthiazol-5(2H)-ylidene]ethyl phosphate + 2 H2O + H(+). The protein operates within cofactor biosynthesis; thiamine diphosphate biosynthesis. In terms of biological role, catalyzes the rearrangement of 1-deoxy-D-xylulose 5-phosphate (DXP) to produce the thiazole phosphate moiety of thiamine. Sulfur is provided by the thiocarboxylate moiety of the carrier protein ThiS. In vitro, sulfur can be provided by H(2)S. This is Thiazole synthase from Streptomyces griseus subsp. griseus (strain JCM 4626 / CBS 651.72 / NBRC 13350 / KCC S-0626 / ISP 5235).